A 769-amino-acid chain; its full sequence is Glutathione biosynthesis bifunctional protein GshAB (769 aa).

A glutamate--cysteine ligase region spans residues 1–347 (MLDSFKENEA…QLADENENNI (347 aa)). One can recognise an ATP-grasp domain in the interval 514-768 (KLVLAEHGIR…IGDKILDFLF (255 aa)). Residue 541–599 (SLFEDKQIVVKPKSTNYGWGISIFKNKFTLEDYQEALNIAFSYDSSVIIEEFIPGDEFR) participates in ATP binding. Positions 721, 738, and 740 each coordinate Mg(2+). Mn(2+)-binding residues include Asp721, Glu738, and Asn740.

This sequence in the N-terminal section; belongs to the glutamate--cysteine ligase type 1 family. Type 2 subfamily. In terms of assembly, monomer. It depends on Mg(2+) as a cofactor. The cofactor is Mn(2+).

The catalysed reaction is L-cysteine + L-glutamate + ATP = gamma-L-glutamyl-L-cysteine + ADP + phosphate + H(+). The enzyme catalyses gamma-L-glutamyl-L-cysteine + glycine + ATP = glutathione + ADP + phosphate + H(+). The protein operates within sulfur metabolism; glutathione biosynthesis; glutathione from L-cysteine and L-glutamate: step 1/2. It functions in the pathway sulfur metabolism; glutathione biosynthesis; glutathione from L-cysteine and L-glutamate: step 2/2. Its function is as follows. Synthesizes glutathione from L-glutamate and L-cysteine via gamma-L-glutamyl-L-cysteine. The sequence is that of Glutathione biosynthesis bifunctional protein GshAB from Listeria innocua serovar 6a (strain ATCC BAA-680 / CLIP 11262).